The chain runs to 132 residues: Histone H2B.9 (132 aa).

Residues 1–11 show a composition bias toward basic and acidic residues; the sequence is MAPKAEKKPAE. A disordered region spans residues 1-41; that stretch reads MAPKAEKKPAEKAPAPKAEKKIAKEGGTSEIVKKKKKTKKS. Ala-2 is modified (n,N,N-trimethylalanine; alternate). Ala-2 carries the n,N-dimethylalanine; alternate modification. Ala-2 is modified (N-methylalanine; alternate). Lys-4 bears the N6-methyllysine mark. Residues Lys-7, Lys-12, Lys-20, and Lys-21 each carry the N6-acetyllysine modification. Lys-128 participates in a covalent cross-link: Glycyl lysine isopeptide (Lys-Gly) (interchain with G-Cter in ubiquitin).

The protein belongs to the histone H2B family. In terms of assembly, the nucleosome is a histone octamer containing two molecules each of H2A, H2B, H3 and H4 assembled in one H3-H4 heterotetramer and two H2A-H2B heterodimers. The octamer wraps approximately 147 bp of DNA. In terms of processing, can be acetylated to form H2BK6ac, H2BK33ac and H2BK34ac. Monoubiquitinated by BRE1 to form H2BK143ub1 and deubiquitinated by UBP26. Required for heterochromatic histone H3 di- and trimethylation at H3K4me. May give a specific tag for epigenetic transcriptional activation.

Its subcellular location is the nucleus. The protein resides in the chromosome. Core component of nucleosome. Nucleosomes wrap and compact DNA into chromatin, limiting DNA accessibility to the cellular machineries which require DNA as a template. Histones thereby play a central role in transcription regulation, DNA repair, DNA replication and chromosomal stability. DNA accessibility is regulated via a complex set of post-translational modifications of histones, also called histone code, and nucleosome remodeling. This chain is Histone H2B.9, found in Arabidopsis thaliana (Mouse-ear cress).